Here is a 197-residue protein sequence, read N- to C-terminus: Imidazoleglycerol-phosphate dehydratase (197 aa).

It belongs to the imidazoleglycerol-phosphate dehydratase family.

Its subcellular location is the cytoplasm. It catalyses the reaction D-erythro-1-(imidazol-4-yl)glycerol 3-phosphate = 3-(imidazol-4-yl)-2-oxopropyl phosphate + H2O. The protein operates within amino-acid biosynthesis; L-histidine biosynthesis; L-histidine from 5-phospho-alpha-D-ribose 1-diphosphate: step 6/9. This is Imidazoleglycerol-phosphate dehydratase from Novosphingobium aromaticivorans (strain ATCC 700278 / DSM 12444 / CCUG 56034 / CIP 105152 / NBRC 16084 / F199).